Here is a 338-residue protein sequence, read N- to C-terminus: Phenylalanine--tRNA ligase alpha subunit (338 aa).

Glutamate 252 is a binding site for Mg(2+).

It belongs to the class-II aminoacyl-tRNA synthetase family. Phe-tRNA synthetase alpha subunit type 1 subfamily. Tetramer of two alpha and two beta subunits. Mg(2+) serves as cofactor.

It localises to the cytoplasm. It carries out the reaction tRNA(Phe) + L-phenylalanine + ATP = L-phenylalanyl-tRNA(Phe) + AMP + diphosphate + H(+). This is Phenylalanine--tRNA ligase alpha subunit from Pseudomonas entomophila (strain L48).